The sequence spans 339 residues: Transmembrane protein 120B (339 aa).

Residues 1 to 67 are a coiled coil; sequence MSGQLERCER…KHTLQRYKRH (67 aa). Transmembrane regions (helical) follow at residues 102–124, 132–152, 159–179, 187–207, 270–290, and 302–322; these read GLYL…AKFA, FKLY…FVLH, VFNF…SILI, GWWV…LTWP, FLLP…VTLF, and QVFV…LTTL.

The protein belongs to the TMEM120 family. As to quaternary structure, heterooligomer with TMEM120A. Expressed in inguinal and subcutaneous white adipose tissue and in brown adipose tissue.

Its subcellular location is the nucleus inner membrane. Its function is as follows. Necessary for efficient adipogenesis. Does not show ion channel activity. The sequence is that of Transmembrane protein 120B from Mus musculus (Mouse).